We begin with the raw amino-acid sequence, 484 residues long: Dolichyl-P-Man:Man5GlcNAc2-PP-dolichol alpha-1,3-mannosyltransferase l(2)not2 (484 aa).

Residues 1 to 43 (MAPPKAASHRPAVRRKKSGTLVDSILDKYLNVRFFKYLLLEPA) are Cytoplasmic-facing. A helical transmembrane segment spans residues 44 to 64 (ALPIVGLFVLLAELVINVVVI). Residues 65–97 (QRVPYTEIDWVAYMQECEGFLNGTTNYSLLRGD) are Lumenal-facing. The chain crosses the membrane as a helical span at residues 98–118 (TGPLVYPAAFVYIYSALYYVT). Residues 119 to 125 (SHGTNVR) are Cytoplasmic-facing. The chain crosses the membrane as a helical span at residues 126–146 (LAQYIFAGIYLLQLALVLRLY). The Lumenal portion of the chain corresponds to 147 to 171 (SKSRKVPPYVLVLSAFTSYRIHSIY). Residues 172–192 (VLRLFNDPVAVLLLYAALNLF) traverse the membrane as a helical segment. Topologically, residues 193 to 211 (LDRRWTLGSTFFSLAVGVK) are cytoplasmic. Residues 212–232 (MNILLFAPALLLFYLANLGLL) form a helical membrane-spanning segment. A topological domain (lumenal) is located at residue arginine 233. The helical transmembrane segment at 234 to 254 (TILQLAVCGVIQLLLGAPFLL) threads the bilayer. Residues 255–294 (THPVEYLRGSFDLGRIFEHKWTVNYRFLSRDVFENRTFHV) lie on the Cytoplasmic side of the membrane. A helical membrane pass occupies residues 295–315 (SLLGLHLLLLLAFAKPTWTFF). The Lumenal segment spans residues 316-403 (QSYVRLRRIE…YGIHFDRCTQ (88 aa)). Residues 404–424 (LALLPFFLCNLVGVACSRSLH) form a helical membrane-spanning segment. The Cytoplasmic segment spans residues 425 to 426 (YQ). The helical transmembrane segment at 427-447 (FYVWYFHSLPYLAWSTPYSLG) threads the bilayer. Topologically, residues 448-484 (VRCLILGLIEYCWNTYPSTNFSSAALHFTHIIPPYQL) are lumenal.

The protein belongs to the glycosyltransferase ALG3 family.

The protein localises to the endoplasmic reticulum membrane. It catalyses the reaction an alpha-D-Man-(1-&gt;2)-alpha-D-Man-(1-&gt;2)-alpha-D-Man-(1-&gt;3)-[alpha-D-Man-(1-&gt;6)]-beta-D-Man-(1-&gt;4)-beta-D-GlcNAc-(1-&gt;4)-alpha-D-GlcNAc-diphospho-di-trans,poly-cis-dolichol + a di-trans,poly-cis-dolichyl beta-D-mannosyl phosphate = an alpha-D-Man-(1-&gt;2)-alpha-D-Man-(1-&gt;2)-alpha-D-Man-(1-&gt;3)-[alpha-D-Man-(1-&gt;3)-alpha-D-Man-(1-&gt;6)]-beta-D-Man-(1-&gt;4)-beta-D-GlcNAc-(1-&gt;4)-alpha-D-GlcNAc-diphospho-di-trans,poly-cis-dolichol + a di-trans,poly-cis-dolichyl phosphate + H(+). The protein operates within protein modification; protein glycosylation. Probable alpha-1,3-mannosyltransferase involved in the N-glycosylation pathway. Involved in glycosylation of the TNF receptor grnd, regulating its ligand affinity. Required for normal epithelial growth and architecture. Suppressor of JNK-dependent intestinal stem cell proliferation. The polypeptide is Dolichyl-P-Man:Man5GlcNAc2-PP-dolichol alpha-1,3-mannosyltransferase l(2)not2 (Drosophila melanogaster (Fruit fly)).